A 530-amino-acid polypeptide reads, in one-letter code: MAMVTPGLWANFSHSSHELGIANGFEFLNSLLVAYRLPGLLLLFSITIILFQPLRKKSDLPLINSGKGPFSILRGYRSRKTFAAELPRLVAEGLSKASAFRIAAPDGVNIVLAPSYAHEIGEHPDLNPGPIAGDEFNCHIDGFEVFAQLGTSDVISESVRTRLTRQLTKLTPLLTSETALLLQSQWKDAPNWVEVSPHETAMFILSRLSSLVFVGDDLGRNPDWVHILTSYNNEAFAAAEELNLWPQILRPLVAHLKPSCRQLRRYIRDARALLIPVIEQRHHAQSQGDRREYNDAIEWLNETSHSLAQSYDPLLSQMLLAIGSFHTSSDLLGQVLLDLCMRQDWEVLVGELRKEIISSLQGVGWDKISLNNLKLMDSVLKESQRLKPASTVTMGRYASREIILSDGTRIPKGSTVFIANVAMRDPNIYPDPDVFIPDRFTTRREKGDSSAYLVSASPEHIGFGLGRHACPGRFFAANEVKIVLSHMLLKYDIKLPDNGAAVAPSTSGIFLETNPNARICVRRRKEEILI.

Residues 31 to 51 (LLVAYRLPGLLLLFSITIILF) form a helical membrane-spanning segment. C470 is a binding site for heme.

The protein belongs to the cytochrome P450 family. It depends on heme as a cofactor.

Its subcellular location is the membrane. It functions in the pathway secondary metabolite biosynthesis; terpenoid biosynthesis. In terms of biological role, cytochrome P450 monooxygenase; part of the gene cluster B that mediates the biosynthesis of the fungal meroterpenoid acetoxydehydroaustin. The first step of the pathway is the synthesis of 3,5-dimethylorsellinic acid by the polyketide synthase ausA. 3,5-dimethylorsellinic acid is then prenylated by the polyprenyl transferase ausN. Further epoxidation by the FAD-dependent monooxygenase ausM and cyclization by the probable terpene cyclase ausL lead to the formation of protoaustinoid A. Protoaustinoid A is then oxidized to spiro-lactone preaustinoid A3 by the combined action of the FAD-binding monooxygenases ausB and ausC, and the dioxygenase ausE. Acid-catalyzed keto-rearrangement and ring contraction of the tetraketide portion of preaustinoid A3 by ausJ lead to the formation of preaustinoid A4. The aldo-keto reductase ausK, with the help of ausH, is involved in the next step by transforming preaustinoid A4 into isoaustinone which is in turn hydroxylated by the P450 monooxygenase ausI to form austinolide. The cytochrome P450 monooxygenase ausG then modifies austinolide to austinol. Austinol is further acetylated to austin by the O-acetyltransferase ausP, which spontaneously changes to dehydroaustin. The cytochrome P450 monooxygenase then converts dehydroaustin is into 7-dehydrodehydroaustin. The hydroxylation catalyzed by ausR permits the second O-acetyltransferase ausQ to add an additional acetyl group to the molecule, leading to the formation of acetoxydehydroaustin. Due to genetic rearrangements of the clusters and the subsequent loss of some enzymes, the end product of the Penicillium brasilianum austinoid biosynthesis clusters is acetoxydehydroaustin. The protein is Cytochrome P450 monooxygenase ausG of Penicillium brasilianum.